The following is a 571-amino-acid chain: DDB1- and CUL4-associated factor 11 homolog (571 aa).

The tract at residues 51–75 (RMKPNHSNDSDTDFSSDDEGCPKMT) is disordered. Over residues 60–69 (SDTDFSSDDE) the composition is skewed to acidic residues. 6 WD repeats span residues 162–201 (RVATKSFCTQYIQNGTKIVVASQDEKIRFYQRNPDKSKYR), 266–305 (RDHCAVFCVKFSDSSEQIVCGTSQYSIHVFDVEQRRRIRT), 309–349 (AHED…DGDV), 357–396 (GHRDGVTHVDSRQDERYLLSNSKDQTIKVWDLRKFSNMSG), 435–479 (GHSV…VSRR), and 482–521 (GHTAVVRECDWHPTENEIVSSAWDGVTTVWTWDERQEGVI).

The protein belongs to the WD repeat LEC14B family.

Functionally, involved in regulation of lifespan. Required for dopaminergic CEP neuron degeneration in response to Mn(2+). Inhibits the skn-1-mediated up-regulation of tatn-1. The protein is DDB1- and CUL4-associated factor 11 homolog of Caenorhabditis elegans.